A 71-amino-acid polypeptide reads, in one-letter code: Small ribosomal subunit protein bS21 (71 aa).

Over residues 48–59 the composition is skewed to basic residues; the sequence is EKASLAKRHAKR. Residues 48–71 form a disordered region; the sequence is EKASLAKRHAKRNARENARNTRLY. Positions 60–71 are enriched in basic and acidic residues; sequence NARENARNTRLY.

It belongs to the bacterial ribosomal protein bS21 family.

The sequence is that of Small ribosomal subunit protein bS21 from Actinobacillus pleuropneumoniae serotype 5b (strain L20).